The primary structure comprises 103 residues: Small ribosomal subunit protein uS10 (103 aa).

The protein belongs to the universal ribosomal protein uS10 family. As to quaternary structure, part of the 30S ribosomal subunit.

Its function is as follows. Involved in the binding of tRNA to the ribosomes. In Shewanella loihica (strain ATCC BAA-1088 / PV-4), this protein is Small ribosomal subunit protein uS10.